The primary structure comprises 471 residues: Proline--tRNA ligase 2 (471 aa).

The protein belongs to the class-II aminoacyl-tRNA synthetase family. ProS type 3 subfamily. Homodimer.

The protein resides in the cytoplasm. It carries out the reaction tRNA(Pro) + L-proline + ATP = L-prolyl-tRNA(Pro) + AMP + diphosphate. In terms of biological role, catalyzes the attachment of proline to tRNA(Pro) in a two-step reaction: proline is first activated by ATP to form Pro-AMP and then transferred to the acceptor end of tRNA(Pro). This is Proline--tRNA ligase 2 from Streptomyces avermitilis (strain ATCC 31267 / DSM 46492 / JCM 5070 / NBRC 14893 / NCIMB 12804 / NRRL 8165 / MA-4680).